A 375-amino-acid chain; its full sequence is LIM domain-binding protein 1 (375 aa).

Disordered stretches follow at residues Pro-248 to Leu-294 and Asp-331 to Gln-375. Low complexity predominate over residues Ser-266–Asn-282. The region spanning Asp-300 to Glu-339 is the LIM interaction domain (LID) domain.

It belongs to the LDB family. Forms homodimers and heterodimers. Interacts with the LIM domain of LIM/homeobox factor lhx1/lim1, and with lhx3/lim3 and lhx5/lim5. Activates lhx1/lim1 by binding. The stoichiometry of lhx1/lim1 and ldb1 is important for their function and an excess of ldb1 can inhibit lhx1/lim1 function. When bound to lhx1/lim1, escapes degradation by rnf12. The N-terminus interacts with the N-terminal region of rnf12. Post-translationally, undergoes rnf12-mediated ubiquitin-proteasome-dependent degradation. As to expression, ubiquitously expressed in the early gastrula before localizing to the dorsal region of the vegetal hemisphere, which contains the Spemann organizer. Expressed in the CNS, pronephros and tail bud in neurula and tail-bud stage embryos. Expressed in multiple adult tissues including brain, heart, lung, stomach, intestine, liver, spleen, kidney, ovary, muscle and skin.

It is found in the nucleus. Functionally, binds to the LIM domain of a wide variety of LIM domain-containing transcription factors. Acts as a coactivator together with otx2 to stimulate lhx1/lim1-mediated activation of the gsc promoter in the Spemann organizer. Acts synergistically with lhx1/lim1 and ssbp in axis formation. The sequence is that of LIM domain-binding protein 1 (ldb1) from Xenopus laevis (African clawed frog).